A 315-amino-acid polypeptide reads, in one-letter code: MKPSLQVEFCGHIYENPLMNASGVCCMTTNELDDMARSSSGAFITKSATSMERDGNPEPRYVSVPLGSINSMGLPNKGIDYYLDYVLDRQDRFPSENPPFMSVAGMSIDENIKLLHRIQDSNFRGITELNLSCPNVPGKPQVAYDFELTDQILSSVFEFFTKPLGVKLPPYFDFAHFDAMACILNKYPIAYVNCINSVGNGLYIDVEKESVVIKPKDGFGGIGGEYIKPTALANVRAFYNRLNGRIRIIGTGGIKTGQDAFEHLLCGATMLQIGTELQNEGTEIFERINAELLQILEQKGYQSIEDFRGKLRSIS.

Residues Lys-46, 70–74 (NSMGL), and Asn-130 each bind substrate. 46 to 47 (KS) serves as a coordination point for FMN. Position 130 (Asn-130) interacts with FMN. The active-site Nucleophile is the Cys-133. FMN contacts are provided by Lys-167 and Ile-195. A substrate-binding site is contributed by 196-197 (NS). FMN contacts are provided by residues Gly-224, 252–253 (GG), and 274–275 (GT).

The protein belongs to the dihydroorotate dehydrogenase family. Type 1 subfamily. Homodimer. FMN is required as a cofactor.

The protein resides in the cytoplasm. The enzyme catalyses (S)-dihydroorotate + fumarate = orotate + succinate. It participates in pyrimidine metabolism; UMP biosynthesis via de novo pathway. Its function is as follows. Catalyzes the conversion of dihydroorotate to orotate with fumarate as the electron acceptor. The chain is Dihydroorotate dehydrogenase (fumarate) (URA1) from Kluyveromyces lactis (strain ATCC 8585 / CBS 2359 / DSM 70799 / NBRC 1267 / NRRL Y-1140 / WM37) (Yeast).